Here is a 220-residue protein sequence, read N- to C-terminus: UPF0319 protein YccT (220 aa).

An N-terminal signal peptide occupies residues 1–20 (MKTGALATFLALCLPVTVFA).

This sequence belongs to the UPF0319 family.

This is UPF0319 protein YccT from Salmonella agona (strain SL483).